A 159-amino-acid chain; its full sequence is Transcriptional repressor NrdR (159 aa).

Residues 3-34 (CPFCHTPDTSVIDSRVSEEGDRIRRRRRCPHC) fold into a zinc finger. Residues 49-139 (PQVVKQDGNR…VYRSFQGAAD (91 aa)) enclose the ATP-cone domain.

It belongs to the NrdR family. Zn(2+) is required as a cofactor.

Negatively regulates transcription of bacterial ribonucleotide reductase nrd genes and operons by binding to NrdR-boxes. In Nitrosospira multiformis (strain ATCC 25196 / NCIMB 11849 / C 71), this protein is Transcriptional repressor NrdR.